Reading from the N-terminus, the 91-residue chain is Large ribosomal subunit protein bL27 (91 aa).

A disordered region spans residues 1–26 (MAHKKGVGSSRNGRDSNPKMRGVKRF).

This sequence belongs to the bacterial ribosomal protein bL27 family.

The protein is Large ribosomal subunit protein bL27 of Chloroflexus aurantiacus (strain ATCC 29366 / DSM 635 / J-10-fl).